The sequence spans 325 residues: ATP phosphoribosyltransferase (325 aa).

This sequence belongs to the ATP phosphoribosyltransferase family. Long subfamily. Mg(2+) serves as cofactor.

Its subcellular location is the cytoplasm. It carries out the reaction 1-(5-phospho-beta-D-ribosyl)-ATP + diphosphate = 5-phospho-alpha-D-ribose 1-diphosphate + ATP. Its pathway is amino-acid biosynthesis; L-histidine biosynthesis; L-histidine from 5-phospho-alpha-D-ribose 1-diphosphate: step 1/9. Its activity is regulated as follows. Feedback inhibited by histidine. Catalyzes the condensation of ATP and 5-phosphoribose 1-diphosphate to form N'-(5'-phosphoribosyl)-ATP (PR-ATP). Has a crucial role in the pathway because the rate of histidine biosynthesis seems to be controlled primarily by regulation of HisG enzymatic activity. The chain is ATP phosphoribosyltransferase from Nitrobacter winogradskyi (strain ATCC 25391 / DSM 10237 / CIP 104748 / NCIMB 11846 / Nb-255).